A 248-amino-acid polypeptide reads, in one-letter code: Gamma-glutamyl peptidase 2 (248 aa).

The Glutamine amidotransferase type-1 domain occupies S17–V212. The active-site Nucleophile is the C101. Catalysis depends on residues H191 and E193.

The protein belongs to the peptidase C26 family.

The protein resides in the cytoplasm. It localises to the cytosol. It catalyses the reaction an S-[(1E)-1-(hydroxyimino)-omega-(methylsulfanyl)alkyl]-L-glutathione + H2O = an S-[(1E)-1-(hydroxyimino)-omega-(methylsulfanyl)alkyl]-L-cysteinylglycine + L-glutamate. It carries out the reaction (E)-1-(glutathione-S-yl)-2-(1H-indol-3-yl)acetohydroximate + H2O = (E)-1-(glycyl-L-cystein-S-yl)-2-(1H-indol-3-yl)acetohydroximate + L-glutamate. The enzyme catalyses 2-(glutathion-S-yl)-2-(1H-indol-3-yl)acetonitrile + H2O = 2-(glycyl-L-cystein-S-yl)-2-(1H-indol-3-yl)acetonitrile + L-glutamate. The catalysed reaction is (Z)-1-(glutathione-S-yl)-2-phenylacetohydroximate + H2O = (Z)-1-(glycyl-L-cystein-S-yl)-2-phenylacetohydroximate + L-glutamate. The protein operates within secondary metabolite biosynthesis. In terms of biological role, involved in glucosinolate biosynthesis. Hydrolyzes the gamma-glutamyl peptide bond of several glutathione (GSH) conjugates to produce Cys-Gly conjugates related to glucosinolates. The gamma-Glu-Cys-Gly-GSH conjugates are the sulfur-donating molecule in glucosinolate biosynthesis. The sequence is that of Gamma-glutamyl peptidase 2 from Arabidopsis thaliana (Mouse-ear cress).